Reading from the N-terminus, the 625-residue chain is Threonine--tRNA ligase (625 aa).

The editing domain stretch occupies residues 1-143 (MRILLIHSDY…ELSRTIIPEG (143 aa)). Residues 206–505 (PHVKLMLEHE…MQEGKKPMLP (300 aa)) form a catalytic region. Cys-298, His-350, and His-474 together coordinate Zn(2+).

The protein belongs to the class-II aminoacyl-tRNA synthetase family. Homodimer. Zn(2+) serves as cofactor.

The protein localises to the cytoplasm. The catalysed reaction is tRNA(Thr) + L-threonine + ATP = L-threonyl-tRNA(Thr) + AMP + diphosphate + H(+). Catalyzes the attachment of threonine to tRNA(Thr) in a two-step reaction: L-threonine is first activated by ATP to form Thr-AMP and then transferred to the acceptor end of tRNA(Thr). Also edits incorrectly charged L-seryl-tRNA(Thr). The polypeptide is Threonine--tRNA ligase (Pyrococcus horikoshii (strain ATCC 700860 / DSM 12428 / JCM 9974 / NBRC 100139 / OT-3)).